The following is a 156-amino-acid chain: MPMRLQKSTMCGLYAVLELAANPDRQVSAGDIADKYDISLNHLAKVLRALVRARLIESVRGPGGGYRFAGNPKRVTLLDIIALFEDTGLDLQEAASDDHEESRALHKVLRDIDEIAMTTLRSVSITSLLKVIDTERRKTERGPNGASARHSSAGRA.

One can recognise an HTH rrf2-type domain in the interval 4 to 130; sequence RLQKSTMCGL…RSVSITSLLK (127 aa). Positions 136–156 are disordered; sequence RRKTERGPNGASARHSSAGRA. The span at 145–156 shows a compositional bias: low complexity; it reads GASARHSSAGRA.

This is Putative HTH-type transcriptional regulator BadM (badM) from Rhodopseudomonas palustris (strain ATCC BAA-98 / CGA009).